Consider the following 547-residue polypeptide: CTP synthase (547 aa).

Residues Met-1–Ile-265 form an amidoligase domain region. A CTP-binding site is contributed by Ser-13. Ser-13 is a UTP binding site. ATP is bound by residues Ser-14–Leu-19 and Asp-71. Asp-71 and Glu-139 together coordinate Mg(2+). Residues Asp-146–Glu-148, Lys-186–Gln-191, and Lys-222 each bind CTP. Residues Lys-186 to Gln-191 and Lys-222 each bind UTP. The Glutamine amidotransferase type-1 domain maps to Lys-291 to Leu-546. Gly-353 provides a ligand contact to L-glutamine. Cys-380 functions as the Nucleophile; for glutamine hydrolysis in the catalytic mechanism. L-glutamine contacts are provided by residues Leu-381 to Gln-384, Glu-404, and Arg-474. Catalysis depends on residues His-519 and Glu-521.

This sequence belongs to the CTP synthase family. Homotetramer.

It carries out the reaction UTP + L-glutamine + ATP + H2O = CTP + L-glutamate + ADP + phosphate + 2 H(+). The catalysed reaction is L-glutamine + H2O = L-glutamate + NH4(+). It catalyses the reaction UTP + NH4(+) + ATP = CTP + ADP + phosphate + 2 H(+). Its pathway is pyrimidine metabolism; CTP biosynthesis via de novo pathway; CTP from UDP: step 2/2. With respect to regulation, allosterically activated by GTP, when glutamine is the substrate; GTP has no effect on the reaction when ammonia is the substrate. The allosteric effector GTP functions by stabilizing the protein conformation that binds the tetrahedral intermediate(s) formed during glutamine hydrolysis. Inhibited by the product CTP, via allosteric rather than competitive inhibition. In terms of biological role, catalyzes the ATP-dependent amination of UTP to CTP with either L-glutamine or ammonia as the source of nitrogen. Regulates intracellular CTP levels through interactions with the four ribonucleotide triphosphates. This chain is CTP synthase, found in Jannaschia sp. (strain CCS1).